We begin with the raw amino-acid sequence, 62 residues long: Ferredoxin-1 (62 aa).

4Fe-4S ferredoxin-type domains follow at residues 2–28 (ALYI…SAGS) and 29–62 (EIYV…IVQG). [4Fe-4S] cluster contacts are provided by Cys9, Cys12, Cys15, Cys19, Cys38, Cys41, Cys50, and Cys54.

[4Fe-4S] cluster is required as a cofactor.

Its function is as follows. Ferredoxins are iron-sulfur proteins that transfer electrons in a wide variety of metabolic reactions. The protein is Ferredoxin-1 of Chlorobaculum tepidum (strain ATCC 49652 / DSM 12025 / NBRC 103806 / TLS) (Chlorobium tepidum).